The sequence spans 612 residues: Autophagy-related protein 28 (612 aa).

A disordered region spans residues 44–72 (NHMEEQSPKFESSFPRRTSEGPVDDVGKS). A coiled-coil region spans residues 214–296 (YQAKAQDKQA…QRTLKNECFQ (83 aa)).

This sequence belongs to the ATG28 family. As to quaternary structure, interacts with ATG35.

Its subcellular location is the cytoplasm. It localises to the vacuole membrane. The protein resides in the cytoplasmic vesicle membrane. Its function is as follows. Required for the autophagic degradation of peroxisomes called pexophagy, but not essential for general autophagy. Involved in resistance to elevated pH. This is Autophagy-related protein 28 (ATG28) from Komagataella phaffii (strain GS115 / ATCC 20864) (Yeast).